A 379-amino-acid chain; its full sequence is tRNA-specific 2-thiouridylase MnmA (379 aa).

Residues 9–16 (AMSGGVDS) and M35 each bind ATP. The interval 94-96 (NPD) is interaction with target base in tRNA. The active-site Nucleophile is C99. A disulfide bridge connects residues C99 and C195. Residue G123 participates in ATP binding. Residues 145 to 147 (KDQ) form an interaction with tRNA region. C195 serves as the catalytic Cysteine persulfide intermediate. Residues 307 to 308 (RY) form an interaction with tRNA region.

It belongs to the MnmA/TRMU family.

Its subcellular location is the cytoplasm. It carries out the reaction S-sulfanyl-L-cysteinyl-[protein] + uridine(34) in tRNA + AH2 + ATP = 2-thiouridine(34) in tRNA + L-cysteinyl-[protein] + A + AMP + diphosphate + H(+). Functionally, catalyzes the 2-thiolation of uridine at the wobble position (U34) of tRNA, leading to the formation of s(2)U34. In Xylella fastidiosa (strain M23), this protein is tRNA-specific 2-thiouridylase MnmA.